The following is a 692-amino-acid chain: Elongation factor G (692 aa).

The 275-residue stretch at 8-282 folds into the tr-type G domain; sequence PNTRNIGIMA…NVVAYLPSPV (275 aa). GTP contacts are provided by residues 17 to 24, 81 to 85, and 135 to 138; these read AHIDAGKT, DTPGH, and NKMD.

The protein belongs to the TRAFAC class translation factor GTPase superfamily. Classic translation factor GTPase family. EF-G/EF-2 subfamily.

The protein resides in the cytoplasm. Catalyzes the GTP-dependent ribosomal translocation step during translation elongation. During this step, the ribosome changes from the pre-translocational (PRE) to the post-translocational (POST) state as the newly formed A-site-bound peptidyl-tRNA and P-site-bound deacylated tRNA move to the P and E sites, respectively. Catalyzes the coordinated movement of the two tRNA molecules, the mRNA and conformational changes in the ribosome. In Brevibacillus brevis (strain 47 / JCM 6285 / NBRC 100599), this protein is Elongation factor G.